Consider the following 369-residue polypeptide: Histidinol-phosphate aminotransferase (369 aa).

A disordered region spans residues 1 to 39 (MSFGIDDLPVRDELRGKSPYGAPQLDVPVRLNTNENPYP). Lysine 230 is subject to N6-(pyridoxal phosphate)lysine.

It belongs to the class-II pyridoxal-phosphate-dependent aminotransferase family. Histidinol-phosphate aminotransferase subfamily. Homodimer. Pyridoxal 5'-phosphate is required as a cofactor.

The catalysed reaction is L-histidinol phosphate + 2-oxoglutarate = 3-(imidazol-4-yl)-2-oxopropyl phosphate + L-glutamate. Its pathway is amino-acid biosynthesis; L-histidine biosynthesis; L-histidine from 5-phospho-alpha-D-ribose 1-diphosphate: step 7/9. The sequence is that of Histidinol-phosphate aminotransferase (hisC) from Streptomyces avermitilis (strain ATCC 31267 / DSM 46492 / JCM 5070 / NBRC 14893 / NCIMB 12804 / NRRL 8165 / MA-4680).